A 185-amino-acid chain; its full sequence is MNSDLTSFDKIEQKIGGSRKISNYIIGGMLTIGGIGFLLASISSYTGRDLLPLGNPSTLLFIPQGIIMGAYGVIANLLNFYLWYLVYINFGSGSNYFDKSSKSVEIKRKGLFKDVEVKLNFDEIKSVKLDISEGFNPRRRIALVLKGRKKPLPLSGAGELKPLLQVEEEGARLAKFLDVNLEGLK.

2 helical membrane-spanning segments follow: residues 24–44 (YIIG…SISS) and 66–86 (IIMG…WYLV).

Belongs to the Ycf4 family.

The protein localises to the cellular thylakoid membrane. Seems to be required for the assembly of the photosystem I complex. This is Photosystem I assembly protein Ycf4 from Prochlorococcus marinus (strain AS9601).